We begin with the raw amino-acid sequence, 191 residues long: Glycerol-3-phosphate acyltransferase (191 aa).

5 consecutive transmembrane segments (helical) span residues 10–30 (LAFI…CISA), 57–77 (FGSV…FLAV), 84–104 (FAST…YMAF), 118–138 (FVLV…FFVL), and 158–178 (YALL…LIFI).

It belongs to the PlsY family. Probably interacts with PlsX.

It is found in the cell inner membrane. The catalysed reaction is an acyl phosphate + sn-glycerol 3-phosphate = a 1-acyl-sn-glycero-3-phosphate + phosphate. Its pathway is lipid metabolism; phospholipid metabolism. Its function is as follows. Catalyzes the transfer of an acyl group from acyl-phosphate (acyl-PO(4)) to glycerol-3-phosphate (G3P) to form lysophosphatidic acid (LPA). This enzyme utilizes acyl-phosphate as fatty acyl donor, but not acyl-CoA or acyl-ACP. This chain is Glycerol-3-phosphate acyltransferase, found in Neorickettsia sennetsu (strain ATCC VR-367 / Miyayama) (Ehrlichia sennetsu).